The primary structure comprises 235 residues: MLLTNAYEIAQYIKDAKKETPVKLYVNGQLAGLEIEEAKAFGTDESKLFLTTAERAAAFLEANASVITDSHLEYDRRNSAVPMLDTTRLNARIEPGSFIRDHVQIGNNAVVMMGAVVNIGAVIGDGSMVDMNAVIGARGTLGKNVHLGAGAVVAGVLEPPSKDPVIIEDGVMIGANAVILEGVRVGENAVVAAGSVVTQDVPPGVVVAGTPARIIKQKDEKTSEKTQLVDDLRSL.

The protein belongs to the transferase hexapeptide repeat family. DapH subfamily.

It catalyses the reaction (S)-2,3,4,5-tetrahydrodipicolinate + acetyl-CoA + H2O = L-2-acetamido-6-oxoheptanedioate + CoA. The protein operates within amino-acid biosynthesis; L-lysine biosynthesis via DAP pathway; LL-2,6-diaminopimelate from (S)-tetrahydrodipicolinate (acetylase route): step 1/3. In terms of biological role, catalyzes the transfer of an acetyl group from acetyl-CoA to tetrahydrodipicolinate. The sequence is that of 2,3,4,5-tetrahydropyridine-2,6-dicarboxylate N-acetyltransferase from Exiguobacterium sp. (strain ATCC BAA-1283 / AT1b).